A 507-amino-acid chain; its full sequence is Natural resistance-associated macrophage protein 1 (507 aa).

Residues 1–36 are disordered; it reads MIRDKNPQRVNRPSYGSISSLPSPAPQPEPSRNTYL. The Cytoplasmic portion of the chain corresponds to 1–39; sequence MIRDKNPQRVNRPSYGSISSLPSPAPQPEPSRNTYLSEK. A compositionally biased stretch (polar residues) spans 8–22; the sequence is QRVNRPSYGSISSLP. The chain crosses the membrane as a helical span at residues 40 to 60; the sequence is IPIPSTEQLLWVLLWATVLGL. Residues 61 to 123 lie on the Extracellular side of the membrane; the sequence is LCQRLAARLG…ISFNLLSAGR (63 aa). The chain crosses the membrane as a helical span at residues 124 to 144; that stretch reads IPLWGGVLITIVDTFFFLFLD. The Cytoplasmic segment spans residues 145–152; the sequence is NYGLRKLE. The chain crosses the membrane as a helical span at residues 153–173; sequence AFFGFLVTIMALTFGYEYVVA. Residues 174-199 lie on the Extracellular side of the membrane; that stretch reads RPSQGALLKGLFLPSCPGCGQPELLQ. The chain crosses the membrane as a helical span at residues 200 to 220; it reads AVGIVGAIIMPHNIYLHSALV. The Cytoplasmic portion of the chain corresponds to 221-245; sequence KSREVDRTRRGDVREANMYFLTEAT. A helical transmembrane segment spans residues 246–266; it reads IALFVSFIINLFVMAVFGQAF. Residues 267–305 lie on the Extracellular side of the membrane; it reads YQQTNEEAFNICANSSLHNYAKIFPRDNNTVSVDIYQGG. N-linked (GlcNAc...) asparagine glycosylation is found at asparagine 280 and asparagine 294. Residues 306–326 traverse the membrane as a helical segment; it reads VILGCLFGPAALYIWAVGLLA. The Cytoplasmic segment spans residues 327-353; it reads AGQSSTMTGTYAGQFVMEGFLKLRWSR. Residues 354 to 374 form a helical membrane-spanning segment; sequence FARVLLTRSCAILPTVLVAVF. Residues 375-391 are Extracellular-facing; it reads RDLRDLSGLNDLLNVLQ. The chain crosses the membrane as a helical span at residues 392–412; it reads SLLLPFAVLPILTFTSMPAVM. The Cytoplasmic portion of the chain corresponds to 413–422; the sequence is QEFANGWLSK. The chain crosses the membrane as a helical span at residues 423-443; it reads VITSCIMALVCAINLYFVISY. The Extracellular segment spans residues 444–451; that stretch reads LPSLPHPA. A helical transmembrane segment spans residues 452-472; the sequence is YFGLVALLAIGYLGLTAYLAW. Topologically, residues 473 to 507 are cytoplasmic; the sequence is TCCIAHGAKFLTHSSHQRFLYGLPIEEQEGREGSG.

This sequence belongs to the NRAMP family.

The protein resides in the late endosome membrane. It localises to the lysosome membrane. It carries out the reaction Zn(2+)(in) + H(+)(out) = Zn(2+)(out) + H(+)(in). The catalysed reaction is Fe(2+)(in) + H(+)(out) = Fe(2+)(out) + H(+)(in). It catalyses the reaction Mn(2+)(in) + H(+)(out) = Mn(2+)(out) + H(+)(in). Functionally, macrophage-specific antiporter that fluxes metal ions in either direction against a proton gradient. Localized to late endosomal lysosomal membranes, delivers bivalent cations from the cytosol into these acidic compartments where they may directly affect antimicrobial activity. Involved in iron metabolism and host natural resistance to infection with intracellular parasites. Pathogen resistance involves sequestration of Fe(2+) and Mn(2+), cofactors of both prokaryotic and eukaryotic catalases and superoxide dismutases, not only to protect the macrophage against its own generation of reactive oxygen species, but to deny the cations to the pathogen for synthesis of its protective enzymes. The chain is Natural resistance-associated macrophage protein 1 (Slc11a1) from Rattus norvegicus (Rat).